Reading from the N-terminus, the 261-residue chain is Indole-3-glycerol phosphate synthase (261 aa).

The protein belongs to the TrpC family.

It catalyses the reaction 1-(2-carboxyphenylamino)-1-deoxy-D-ribulose 5-phosphate + H(+) = (1S,2R)-1-C-(indol-3-yl)glycerol 3-phosphate + CO2 + H2O. The protein operates within amino-acid biosynthesis; L-tryptophan biosynthesis; L-tryptophan from chorismate: step 4/5. In Burkholderia thailandensis (strain ATCC 700388 / DSM 13276 / CCUG 48851 / CIP 106301 / E264), this protein is Indole-3-glycerol phosphate synthase.